We begin with the raw amino-acid sequence, 474 residues long: MQKTKMIFTIGPSSDSEEILREFIRIGMNAARLNFSHGDHASHKEKIELIKRLRKEEKSATAILLDIKGPKIRTYNFKNGEAELKNGDEFTFSCGDEILGDNTKCSISYKELYEDIKPGGSILVDDGLLEFKVKEVRGTDIICEVIEGGTIKDHKGVNVPNVPIKLPAVTEKDRSDLIFGCEMEVDFVAASFIRKPEDVLEVREILDSHGGKDIKIISKIESQEGVDNIKEIIKVTDGVMVARGDMGVEIPIENVPIIQKNIIKKCNQAGKIVITATQMLDSMIRNPRPTRAEASDVCNAIFDGTDAIMLSGESASGSFPIEAAMTMSRIAKKAEANLDYNYLLRRLKDPNPNPDAFADAISYSASKTASKFPTKAIVAATQTGSTAKILSKYKPSCPIIAITPYEKVRRSLALNFGIISKKCAYFNSTDEIIEEARKVAKEFEIAETGDNIMVAAGFPTSITGGTNMLKIEKI.

Arg32 is a binding site for substrate. The K(+) site is built by Asn34, Ser36, and Asp66. 34–37 (NFSH) lines the ATP pocket. Residues Arg73 and Lys155 each coordinate ATP. Glu221 contributes to the Mg(2+) binding site. The substrate site is built by Gly244, Asp245, and Thr277. Asp245 contacts Mg(2+).

It belongs to the pyruvate kinase family. As to quaternary structure, homotetramer. Mg(2+) serves as cofactor. It depends on K(+) as a cofactor.

It catalyses the reaction pyruvate + ATP = phosphoenolpyruvate + ADP + H(+). Its pathway is carbohydrate degradation; glycolysis; pyruvate from D-glyceraldehyde 3-phosphate: step 5/5. The sequence is that of Pyruvate kinase (pykF) from Clostridium perfringens (strain 13 / Type A).